Here is a 129-residue protein sequence, read N- to C-terminus: Large ribosomal subunit protein bL12 (129 aa).

The protein belongs to the bacterial ribosomal protein bL12 family. In terms of assembly, homodimer. Part of the ribosomal stalk of the 50S ribosomal subunit. Forms a multimeric L10(L12)X complex, where L10 forms an elongated spine to which 2 to 4 L12 dimers bind in a sequential fashion. Binds GTP-bound translation factors.

Forms part of the ribosomal stalk which helps the ribosome interact with GTP-bound translation factors. Is thus essential for accurate translation. This Treponema denticola (strain ATCC 35405 / DSM 14222 / CIP 103919 / JCM 8153 / KCTC 15104) protein is Large ribosomal subunit protein bL12.